The sequence spans 89 residues: Large ribosomal subunit protein bL27 (89 aa).

Positions Met-1–Leu-21 are disordered.

It belongs to the bacterial ribosomal protein bL27 family.

The sequence is that of Large ribosomal subunit protein bL27 from Roseobacter denitrificans (strain ATCC 33942 / OCh 114) (Erythrobacter sp. (strain OCh 114)).